The sequence spans 390 residues: Chalcone synthase (390 aa).

Residue C164 is part of the active site.

It belongs to the thiolase-like superfamily. Chalcone/stilbene synthases family.

It catalyses the reaction (E)-4-coumaroyl-CoA + 3 malonyl-CoA + 3 H(+) = 2',4,4',6'-tetrahydroxychalcone + 3 CO2 + 4 CoA. It functions in the pathway secondary metabolite biosynthesis; flavonoid biosynthesis. In terms of biological role, the primary product of this enzyme is 4,2',4',6'-tetrahydroxychalcone (also termed naringenin-chalcone or chalcone) which can under specific conditions spontaneously isomerize into naringenin. In Onobrychis viciifolia (Common sainfoin), this protein is Chalcone synthase (CHS).